The primary structure comprises 69 residues: Large ribosomal subunit protein bL31 (69 aa).

Zn(2+) is bound by residues Cys16, Cys18, Cys36, and Cys39.

It belongs to the bacterial ribosomal protein bL31 family. Type A subfamily. In terms of assembly, part of the 50S ribosomal subunit. It depends on Zn(2+) as a cofactor.

Functionally, binds the 23S rRNA. This Ruminiclostridium cellulolyticum (strain ATCC 35319 / DSM 5812 / JCM 6584 / H10) (Clostridium cellulolyticum) protein is Large ribosomal subunit protein bL31.